A 1938-amino-acid chain; its full sequence is Myosin-1 (1938 aa).

The segment at 1-27 (MSLEHEKDPGWQYLKRSREQQLADQSR) is disordered. The span at 16 to 27 (RSREQQLADQSR) shows a compositional bias: basic and acidic residues. The 51-residue stretch at 30-80 (DSKKNVWIPDAEEGYIEGVIKGPGPKADTVIVTAGGKDVTLKKDIVQEVNP) folds into the Myosin N-terminal SH3-like domain. The Myosin motor domain maps to 84–785 (EKTEDMSNLT…VVAHIEDLRD (702 aa)). Lysine 128 carries the N6,N6,N6-trimethyllysine modification. 177-184 (GESGAGKT) lines the ATP pocket. 2 actin-binding regions span residues 660-682 (LNKL…IPNE) and 764-778 (RIGH…GVVA). The interval 846 to 1170 (QLKCGKMAEE…NKQLEIQQDN (325 aa)) is alpha-helical tailpiece (short S2). The segment at 846-1938 (QLKCGKMAEE…GQVVRSATNK (1093 aa)) is rodlike tail (S2 and LMM domains). Residues 846–1938 (QLKCGKMAEE…GQVVRSATNK (1093 aa)) are a coiled coil. The segment at 919–951 (RQEVEKSLNDANDRLSEHEEKNADLEKQRRKAQ) is disordered. Residues 920-951 (QEVEKSLNDANDRLSEHEEKNADLEKQRRKAQ) show a composition bias toward basic and acidic residues. The segment at 1171–1938 (NKKKDSEIIK…GQVVRSATNK (768 aa)) is light meromyosin (LMM).

The protein belongs to the TRAFAC class myosin-kinesin ATPase superfamily. Myosin family. In terms of assembly, muscle myosin is a hexameric protein that consists of 2 heavy chain subunits (MHC), 2 alkali light chain subunits (MLC) and 2 regulatory light chain subunits (MLC-2). Interacts with itr-1 (via c-terminal coiled coil domain). As to expression, found exclusively in the pharyngeal muscle.

The protein localises to the cytoplasm. The protein resides in the myofibril. In terms of biological role, muscle contraction. This Caenorhabditis elegans protein is Myosin-1.